The following is a 98-amino-acid chain: NADH-ubiquinone oxidoreductase chain 4L (98 aa).

3 helical membrane passes run 1-21 (MSLV…GLLM), 29-49 (SLLC…IMVL), and 61-81 (IILL…LVMV).

Belongs to the complex I subunit 4L family. Core subunit of respiratory chain NADH dehydrogenase (Complex I) which is composed of 45 different subunits.

The protein resides in the mitochondrion inner membrane. It carries out the reaction a ubiquinone + NADH + 5 H(+)(in) = a ubiquinol + NAD(+) + 4 H(+)(out). Functionally, core subunit of the mitochondrial membrane respiratory chain NADH dehydrogenase (Complex I) which catalyzes electron transfer from NADH through the respiratory chain, using ubiquinone as an electron acceptor. Part of the enzyme membrane arm which is embedded in the lipid bilayer and involved in proton translocation. This chain is NADH-ubiquinone oxidoreductase chain 4L (MT-ND4L), found in Pseudosoriculus fumidus (Taiwanese brown-toothed shrew).